A 497-amino-acid chain; its full sequence is Cytochrome P450 2D6 (497 aa).

Aspartate 301 lines the substrate pocket. A heme-binding site is contributed by cysteine 443.

Belongs to the cytochrome P450 family. Heme is required as a cofactor.

Its subcellular location is the endoplasmic reticulum membrane. It is found in the microsome membrane. It carries out the reaction (5Z,8Z,11Z,14Z)-eicosatetraenoate + reduced [NADPH--hemoprotein reductase] + O2 = (8R,9S)-epoxy-(5Z,11Z,14Z)-eicosatrienoate + oxidized [NADPH--hemoprotein reductase] + H2O + H(+). The enzyme catalyses (5Z,8Z,11Z,14Z)-eicosatetraenoate + reduced [NADPH--hemoprotein reductase] + O2 = (11R,12S)-epoxy-(5Z,8Z,14Z)-eicosatrienoate + oxidized [NADPH--hemoprotein reductase] + H2O + H(+). It catalyses the reaction (5Z,8Z,11Z,14Z)-eicosatetraenoate + reduced [NADPH--hemoprotein reductase] + O2 = (14S,15R)-epoxy-(5Z,8Z,11Z)-eicosatrienoate + oxidized [NADPH--hemoprotein reductase] + H2O + H(+). The catalysed reaction is N-(5Z,8Z,11Z,14Z-eicosatetraenoyl)-ethanolamine + reduced [NADPH--hemoprotein reductase] + O2 = N-(8,9-epoxy-5Z,11Z,14Z-eicosatrienoyl)-ethanolamine + oxidized [NADPH--hemoprotein reductase] + H2O + H(+). It carries out the reaction N-(5Z,8Z,11Z,14Z-eicosatetraenoyl)-ethanolamine + reduced [NADPH--hemoprotein reductase] + O2 = N-(11,12-epoxy-5Z,8Z,14Z-eicosatrienoyl)-ethanolamine + oxidized [NADPH--hemoprotein reductase] + H2O + H(+). The enzyme catalyses N-(5Z,8Z,11Z,14Z-eicosatetraenoyl)-ethanolamine + reduced [NADPH--hemoprotein reductase] + O2 = N-(14,15-epoxy-5Z,8Z,11Z-eicosatrienoyl)-ethanolamine + oxidized [NADPH--hemoprotein reductase] + H2O + H(+). It catalyses the reaction N-(5Z,8Z,11Z,14Z-eicosatetraenoyl)-ethanolamine + reduced [NADPH--hemoprotein reductase] + O2 = N-(20-hydroxy-5Z,8Z,11Z,14Z-eicosatetraenoyl)-ethanolamine + oxidized [NADPH--hemoprotein reductase] + H2O + H(+). The catalysed reaction is (5Z,8Z,11Z,14Z,17Z)-eicosapentaenoate + reduced [NADPH--hemoprotein reductase] + O2 = (17S,18R)-epoxy-(5Z,8Z,11Z,14Z)-eicosatetraenoate + oxidized [NADPH--hemoprotein reductase] + H2O + H(+). It carries out the reaction (4Z,7Z,10Z,13Z,16Z,19Z)-docosahexaenoate + reduced [NADPH--hemoprotein reductase] + O2 = (19R,20S)-epoxy-(4Z,7Z,10Z,13Z,16Z)-docosapentaenoate + oxidized [NADPH--hemoprotein reductase] + H2O + H(+). The enzyme catalyses (4Z,7Z,10Z,13Z,16Z,19Z)-docosahexaenoate + reduced [NADPH--hemoprotein reductase] + O2 = (19S,20R)-epoxy-(4Z,7Z,10Z,13Z,16Z)-docosapentaenoate + oxidized [NADPH--hemoprotein reductase] + H2O + H(+). It catalyses the reaction cholesterol + reduced [NADPH--hemoprotein reductase] + O2 = 25-hydroxycholesterol + oxidized [NADPH--hemoprotein reductase] + H2O + H(+). The catalysed reaction is all-trans-retinol + reduced [NADPH--hemoprotein reductase] + O2 = all-trans-retinal + oxidized [NADPH--hemoprotein reductase] + 2 H2O + H(+). Its pathway is cofactor metabolism; retinol metabolism. The protein operates within lipid metabolism; fatty acid metabolism. It participates in steroid metabolism; cholesterol metabolism. In terms of biological role, a cytochrome P450 monooxygenase involved in the metabolism of fatty acids, steroids and retinoids. Mechanistically, uses molecular oxygen inserting one oxygen atom into a substrate, and reducing the second into a water molecule, with two electrons provided by NADPH via cytochrome P450 reductase (NADPH--hemoprotein reductase). Catalyzes the epoxidation of double bonds of polyunsaturated fatty acids (PUFA). Metabolizes endocannabinoid arachidonoylethanolamide (anandamide) to 20-hydroxyeicosatetraenoic acid ethanolamide (20-HETE-EA) and 8,9-, 11,12-, and 14,15-epoxyeicosatrienoic acid ethanolamides (EpETrE-EAs), potentially modulating endocannabinoid system signaling. Catalyzes the hydroxylation of carbon-hydrogen bonds. Metabolizes cholesterol toward 25-hydroxycholesterol, a physiological regulator of cellular cholesterol homeostasis. Catalyzes the oxidative transformations of all-trans retinol to all-trans retinal, a precursor for the active form all-trans-retinoic acid. Also involved in the oxidative metabolism of drugs such as antiarrhythmics, adrenoceptor antagonists, and tricyclic antidepressants. The polypeptide is Cytochrome P450 2D6 (CYP2D6) (Pan paniscus (Pygmy chimpanzee)).